A 417-amino-acid polypeptide reads, in one-letter code: Serpin A9 (417 aa).

Positions 1 to 23 (MASYLYGVLFAVGLCAPIYCVSP) are cleaved as a signal peptide. Asn-101 and Asn-390 each carry an N-linked (GlcNAc...) asparagine glycan.

The protein belongs to the serpin family. As to expression, highly expressed in normal germinal center (GC) B-cells and GC B-cell-derived malignancies.

The protein localises to the secreted. The protein resides in the cytoplasm. Its subcellular location is the membrane. Functionally, protease inhibitor that inhibits trypsin and trypsin-like serine proteases (in vitro). Inhibits plasmin and thrombin with lower efficiency (in vitro). The polypeptide is Serpin A9 (SERPINA9) (Homo sapiens (Human)).